A 469-amino-acid polypeptide reads, in one-letter code: UTP--glucose-1-phosphate uridylyltransferase 2 (469 aa).

At Ala-2 the chain carries N-acetylalanine. Residues 85-88, Lys-99, Gln-162, and Gly-191 contribute to the UTP site; that span reads LNGG. 87-88 contributes to the substrate binding site; it reads GG. Residues His-192 and 220–222 each bind substrate; that span reads NSD. Asp-222 and Lys-360 together coordinate UTP.

It belongs to the UDPGP type 1 family. In terms of tissue distribution, expressed in cauline leaves, flowers and siliques.

The protein resides in the cytoplasm. The enzyme catalyses alpha-D-glucose 1-phosphate + UTP + H(+) = UDP-alpha-D-glucose + diphosphate. In terms of biological role, converts glucose 1-phosphate to UDP-glucose, which is the major glycosyl donor for polysaccharides. Acts redundantly with UGP1 and is essential for the synthesis of sucrose, starch and cell wall, and callose deposition. The sequence is that of UTP--glucose-1-phosphate uridylyltransferase 2 from Arabidopsis thaliana (Mouse-ear cress).